Here is a 195-residue protein sequence, read N- to C-terminus: Peptidyl-tRNA hydrolase (195 aa).

TRNA is bound at residue Tyr-17. The Proton acceptor role is filled by His-22. Positions 68, 70, and 116 each coordinate tRNA.

This sequence belongs to the PTH family. In terms of assembly, monomer.

It is found in the cytoplasm. The enzyme catalyses an N-acyl-L-alpha-aminoacyl-tRNA + H2O = an N-acyl-L-amino acid + a tRNA + H(+). In terms of biological role, hydrolyzes ribosome-free peptidyl-tRNAs (with 1 or more amino acids incorporated), which drop off the ribosome during protein synthesis, or as a result of ribosome stalling. Catalyzes the release of premature peptidyl moieties from peptidyl-tRNA molecules trapped in stalled 50S ribosomal subunits, and thus maintains levels of free tRNAs and 50S ribosomes. This Shewanella oneidensis (strain ATCC 700550 / JCM 31522 / CIP 106686 / LMG 19005 / NCIMB 14063 / MR-1) protein is Peptidyl-tRNA hydrolase.